We begin with the raw amino-acid sequence, 435 residues long: tRNA(Ile)-lysidine synthase (435 aa).

Residue 23-28 (SGGMDS) participates in ATP binding.

It belongs to the tRNA(Ile)-lysidine synthase family.

The protein localises to the cytoplasm. It carries out the reaction cytidine(34) in tRNA(Ile2) + L-lysine + ATP = lysidine(34) in tRNA(Ile2) + AMP + diphosphate + H(+). Functionally, ligates lysine onto the cytidine present at position 34 of the AUA codon-specific tRNA(Ile) that contains the anticodon CAU, in an ATP-dependent manner. Cytidine is converted to lysidine, thus changing the amino acid specificity of the tRNA from methionine to isoleucine. The protein is tRNA(Ile)-lysidine synthase of Xanthomonas campestris pv. campestris (strain 8004).